The chain runs to 221 residues: Small ribosomal subunit protein uS3c (221 aa).

The KH type-2 domain maps to 43–121 (IQNYIQKNMR…KLKIAITKIA (79 aa)).

It belongs to the universal ribosomal protein uS3 family. In terms of assembly, part of the 30S ribosomal subunit.

The protein resides in the plastid. It is found in the chloroplast. The protein is Small ribosomal subunit protein uS3c (rps3) of Jasminum nudiflorum (Winter jasmine).